Consider the following 355-residue polypeptide: UDP-N-acetylglucosamine--N-acetylmuramyl-(pentapeptide) pyrophosphoryl-undecaprenol N-acetylglucosamine transferase (355 aa).

UDP-N-acetyl-alpha-D-glucosamine contacts are provided by residues 14–16 (TGG), asparagine 126, arginine 162, serine 190, isoleucine 243, 262–267 (ALTVSE), and glutamine 287.

It belongs to the glycosyltransferase 28 family. MurG subfamily.

It localises to the cell inner membrane. The enzyme catalyses di-trans,octa-cis-undecaprenyl diphospho-N-acetyl-alpha-D-muramoyl-L-alanyl-D-glutamyl-meso-2,6-diaminopimeloyl-D-alanyl-D-alanine + UDP-N-acetyl-alpha-D-glucosamine = di-trans,octa-cis-undecaprenyl diphospho-[N-acetyl-alpha-D-glucosaminyl-(1-&gt;4)]-N-acetyl-alpha-D-muramoyl-L-alanyl-D-glutamyl-meso-2,6-diaminopimeloyl-D-alanyl-D-alanine + UDP + H(+). Its pathway is cell wall biogenesis; peptidoglycan biosynthesis. In terms of biological role, cell wall formation. Catalyzes the transfer of a GlcNAc subunit on undecaprenyl-pyrophosphoryl-MurNAc-pentapeptide (lipid intermediate I) to form undecaprenyl-pyrophosphoryl-MurNAc-(pentapeptide)GlcNAc (lipid intermediate II). This Vibrio parahaemolyticus serotype O3:K6 (strain RIMD 2210633) protein is UDP-N-acetylglucosamine--N-acetylmuramyl-(pentapeptide) pyrophosphoryl-undecaprenol N-acetylglucosamine transferase.